The sequence spans 301 residues: Probable splicing factor ECU05_1440 (301 aa).

An RRM 1 domain is found at 1-70 (MQIFIGKIPN…APISVERANG (70 aa)). 2 disordered regions span residues 106-140 (PPMRYESRSPGRYDPRFSDRYGGRSPEYRGDSFRM) and 255-301 (SKDE…AEND). Composition is skewed to basic and acidic residues over residues 110–140 (YESRSPGRYDPRFSDRYGGRSPEYRGDSFRM) and 255–270 (SKDEYKSRERESHMRS). The RRM 2 domain occupies 182–255 (LKVVFENIAP…HILKTRSYLS (74 aa)).

This sequence belongs to the splicing factor SR family.

It localises to the nucleus. In terms of biological role, plays a role in splicing. This chain is Probable splicing factor ECU05_1440, found in Encephalitozoon cuniculi (strain GB-M1) (Microsporidian parasite).